The chain runs to 171 residues: 3-hydroxydecanoyl-[acyl-carrier-protein] dehydratase (171 aa).

His-70 is a catalytic residue.

Belongs to the thioester dehydratase family. FabA subfamily. In terms of assembly, homodimer.

The protein resides in the cytoplasm. It carries out the reaction a (3R)-hydroxyacyl-[ACP] = a (2E)-enoyl-[ACP] + H2O. It catalyses the reaction (3R)-hydroxydecanoyl-[ACP] = (2E)-decenoyl-[ACP] + H2O. The enzyme catalyses (2E)-decenoyl-[ACP] = (3Z)-decenoyl-[ACP]. Its pathway is lipid metabolism; fatty acid biosynthesis. Necessary for the introduction of cis unsaturation into fatty acids. Catalyzes the dehydration of (3R)-3-hydroxydecanoyl-ACP to E-(2)-decenoyl-ACP and then its isomerization to Z-(3)-decenoyl-ACP. Can catalyze the dehydratase reaction for beta-hydroxyacyl-ACPs with saturated chain lengths up to 16:0, being most active on intermediate chain length. This Pseudomonas syringae pv. tomato (strain ATCC BAA-871 / DC3000) protein is 3-hydroxydecanoyl-[acyl-carrier-protein] dehydratase.